Here is a 378-residue protein sequence, read N- to C-terminus: GDP-mannose 3,5-epimerase 1 (378 aa).

Residues 36–62, D60, and D80 each bind NAD(+); that span reads GAGGFIGSHIARRLKSEGHYIIASDWK. Residues G105 and 145-147 contribute to the substrate site; that span reads SAC. Residues Y175 and K179 each coordinate NAD(+). The Proton acceptor role is filled by Y175. Substrate-binding positions include N204, 217–219, K226, 242–244, R307, and S357; these read EKA and QTR.

The protein belongs to the NAD(P)-dependent epimerase/dehydratase family. In terms of assembly, homodimer. NAD(+) is required as a cofactor.

It catalyses the reaction GDP-alpha-D-mannose = GDP-beta-L-gulose. The catalysed reaction is GDP-beta-L-gulose = GDP-beta-L-galactose. It participates in cofactor biosynthesis; L-ascorbate biosynthesis via GDP-alpha-D-mannose pathway; L-ascorbate from GDP-alpha-D-mannose: step 1/5. Its activity is regulated as follows. Strongly activated by NAD. Activated by NADP. Slightly activated by NADH and NADPH. Inhibited by GDP. Functionally, catalyzes a reversible epimerization of GDP-D-mannose that precedes the committed step in the biosynthesis of vitamin C (L-ascorbate), resulting in the hydrolysis of the highly energetic glycosyl-pyrophosphoryl linkage. Able to catalyze 2 distinct epimerization reactions and can release both GDP-L-galactose and GDP-L-gulose from GDP-mannose. This chain is GDP-mannose 3,5-epimerase 1 (GME-1), found in Oryza sativa subsp. japonica (Rice).